We begin with the raw amino-acid sequence, 223 residues long: Phosphoribosylformylglycinamidine synthase subunit PurQ (223 aa).

The 221-residue stretch at 3–223 folds into the Glutamine amidotransferase type-1 domain; it reads SAVILLPGLN…LFAGALGITA (221 aa). The active-site Nucleophile is the Cys-87. Active-site residues include His-197 and Glu-199.

As to quaternary structure, part of the FGAM synthase complex composed of 1 PurL, 1 PurQ and 2 PurS subunits.

It localises to the cytoplasm. It catalyses the reaction N(2)-formyl-N(1)-(5-phospho-beta-D-ribosyl)glycinamide + L-glutamine + ATP + H2O = 2-formamido-N(1)-(5-O-phospho-beta-D-ribosyl)acetamidine + L-glutamate + ADP + phosphate + H(+). The catalysed reaction is L-glutamine + H2O = L-glutamate + NH4(+). It functions in the pathway purine metabolism; IMP biosynthesis via de novo pathway; 5-amino-1-(5-phospho-D-ribosyl)imidazole from N(2)-formyl-N(1)-(5-phospho-D-ribosyl)glycinamide: step 1/2. Functionally, part of the phosphoribosylformylglycinamidine synthase complex involved in the purines biosynthetic pathway. Catalyzes the ATP-dependent conversion of formylglycinamide ribonucleotide (FGAR) and glutamine to yield formylglycinamidine ribonucleotide (FGAM) and glutamate. The FGAM synthase complex is composed of three subunits. PurQ produces an ammonia molecule by converting glutamine to glutamate. PurL transfers the ammonia molecule to FGAR to form FGAM in an ATP-dependent manner. PurS interacts with PurQ and PurL and is thought to assist in the transfer of the ammonia molecule from PurQ to PurL. The polypeptide is Phosphoribosylformylglycinamidine synthase subunit PurQ (Brucella suis biovar 1 (strain 1330)).